We begin with the raw amino-acid sequence, 95 residues long: Co-chaperonin GroES (95 aa).

This sequence belongs to the GroES chaperonin family. In terms of assembly, heptamer of 7 subunits arranged in a ring. Interacts with the chaperonin GroEL.

The protein resides in the cytoplasm. Functionally, together with the chaperonin GroEL, plays an essential role in assisting protein folding. The GroEL-GroES system forms a nano-cage that allows encapsulation of the non-native substrate proteins and provides a physical environment optimized to promote and accelerate protein folding. GroES binds to the apical surface of the GroEL ring, thereby capping the opening of the GroEL channel. The protein is Co-chaperonin GroES of Staphylococcus saprophyticus subsp. saprophyticus (strain ATCC 15305 / DSM 20229 / NCIMB 8711 / NCTC 7292 / S-41).